The primary structure comprises 338 residues: Popeye domain-containing protein 1 (338 aa).

The Extracellular segment spans residues 1–40; sequence MATESILITTLPMDLNSQINNVTFGLNENETLCENWREIH. Asn-21 and Asn-29 each carry an N-linked (GlcNAc...) asparagine glycan. A helical transmembrane segment spans residues 41-61; it reads HLVFHLANTCFAAGLVIPSTL. Residues 62–65 lie on the Cytoplasmic side of the membrane; sequence NLHM. Residues 66 to 86 form a helical membrane-spanning segment; the sequence is ILLRGMLCLGCIFFIIWAILF. Topologically, residues 87-91 are extracellular; the sequence is RCALD. Residues 92 to 112 form a helical membrane-spanning segment; that stretch reads IMIWNATFLSMNFMHFIYLVY. Over 113–338 the chain is Cytoplasmic; it reads KKRPIKIEKD…VGPLSHAVFC (226 aa).

It belongs to the popeye family.

It localises to the lateral cell membrane. Its subcellular location is the cell junction. The protein localises to the tight junction. It is found in the membrane. The protein resides in the cell membrane. It localises to the sarcolemma. Its subcellular location is the caveola. Its function is as follows. Cell adhesion molecule involved in the establishment and/or maintenance of cell integrity. May play a role in vamp3-mediated vesicular transport and recycling of different receptor molecules. May be involved in the formation and regulation of the tight junction (TJ) paracellular permeability barrier in epithelial cells. May induce primordial adhesive contact and aggregation of epithelial cells in a Ca(2+)-independent manner. May be involved in epithelial movement during corneal sheet formation and regeneration. May play a role in the regulation of cell shape and movement by modulating the Rho-GTPase activity. May be involved in skeletal muscle and heart development as well as in the maintenance of heart function. May also be involved in striated muscle regeneration and in the regulation of cell spreading. The protein is Popeye domain-containing protein 1 (popdc1) of Xenopus tropicalis (Western clawed frog).